The primary structure comprises 1097 residues: DNA-directed RNA polymerase subunit beta (1097 aa).

The interval 1072-1097 (QDINPRRNTPSRPTYESLGTSEYEED) is disordered. A compositionally biased stretch (polar residues) spans 1077 to 1091 (RRNTPSRPTYESLGT).

The protein belongs to the RNA polymerase beta chain family. As to quaternary structure, in cyanobacteria the RNAP catalytic core is composed of 2 alpha, 1 beta, 1 beta', 1 gamma and 1 omega subunit. When a sigma factor is associated with the core the holoenzyme is formed, which can initiate transcription.

It catalyses the reaction RNA(n) + a ribonucleoside 5'-triphosphate = RNA(n+1) + diphosphate. DNA-dependent RNA polymerase catalyzes the transcription of DNA into RNA using the four ribonucleoside triphosphates as substrates. This Prochlorococcus marinus (strain MIT 9215) protein is DNA-directed RNA polymerase subunit beta.